We begin with the raw amino-acid sequence, 337 residues long: ATP-dependent 6-phosphofructokinase (337 aa).

Gly-11 lines the ATP pocket. ADP is bound at residue 21–25 (RAVVR). ATP contacts are provided by residues 72 to 73 (RY) and 102 to 105 (GDGS). Asp-103 lines the Mg(2+) pocket. Residue 125 to 127 (TID) participates in substrate binding. Asp-127 (proton acceptor) is an active-site residue. Arg-154 is an ADP binding site. Substrate-binding positions include Arg-162 and 169–171 (MGR). Residues 185–187 (GAD), Lys-212, and 214–216 (KNH) each bind ADP. Substrate is bound by residues Glu-223, Arg-245, and 251-254 (HILR).

This sequence belongs to the phosphofructokinase type A (PFKA) family. ATP-dependent PFK group I subfamily. Prokaryotic clade 'B1' sub-subfamily. In terms of assembly, homotetramer. Mg(2+) serves as cofactor.

The protein resides in the cytoplasm. The catalysed reaction is beta-D-fructose 6-phosphate + ATP = beta-D-fructose 1,6-bisphosphate + ADP + H(+). The protein operates within carbohydrate degradation; glycolysis; D-glyceraldehyde 3-phosphate and glycerone phosphate from D-glucose: step 3/4. Its activity is regulated as follows. Allosterically activated by ADP and other diphosphonucleosides, and allosterically inhibited by phosphoenolpyruvate. Functionally, catalyzes the phosphorylation of D-fructose 6-phosphate to fructose 1,6-bisphosphate by ATP, the first committing step of glycolysis. The protein is ATP-dependent 6-phosphofructokinase of Streptococcus pyogenes serotype M4 (strain MGAS10750).